A 292-amino-acid polypeptide reads, in one-letter code: RNA-binding P34 protein (292 aa).

The chain crosses the membrane as a helical span at residues Cys-29–Met-46. An RNA-binding region spans residues Glu-219 to Glu-292.

Its subcellular location is the host endoplasmic reticulum membrane. In terms of biological role, acts as a ssRNA-binding protein that may be involved in targeting RNA2 to replication sites or facilitating RNA2 replication. The protein is RNA-binding P34 protein of Lettuce infectious yellows virus (isolate United States/92) (LIYV).